Reading from the N-terminus, the 137-residue chain is Universal stress protein HP_0031 (137 aa).

The protein belongs to the universal stress protein A family.

The protein is Universal stress protein HP_0031 of Helicobacter pylori (strain ATCC 700392 / 26695) (Campylobacter pylori).